The following is a 176-amino-acid chain: Translation initiation factor IF-3 (176 aa).

This sequence belongs to the IF-3 family. As to quaternary structure, monomer.

It localises to the cytoplasm. IF-3 binds to the 30S ribosomal subunit and shifts the equilibrium between 70S ribosomes and their 50S and 30S subunits in favor of the free subunits, thus enhancing the availability of 30S subunits on which protein synthesis initiation begins. The polypeptide is Translation initiation factor IF-3 (Streptococcus equi subsp. zooepidemicus (strain H70)).